A 156-amino-acid chain; its full sequence is Succinate dehydrogenase assembly factor 2-B, mitochondrial (156 aa).

Residues 1-24 (MLRQLIVSTVGRRMPLQMISQSRL) constitute a mitochondrion transit peptide.

The protein belongs to the SDHAF2 family. Interacts with the flavoprotein subunit within the SDH catalytic dimer.

It localises to the mitochondrion matrix. In terms of biological role, plays an essential role in the assembly of succinate dehydrogenase (SDH), an enzyme complex (also referred to as respiratory complex II) that is a component of both the tricarboxylic acid (TCA) cycle and the mitochondrial electron transport chain, and which couples the oxidation of succinate to fumarate with the reduction of ubiquinone (coenzyme Q) to ubiquinol. Required for flavinylation (covalent attachment of FAD) of the flavoprotein subunit of the SDH catalytic dimer. This chain is Succinate dehydrogenase assembly factor 2-B, mitochondrial, found in Drosophila erecta (Fruit fly).